The sequence spans 463 residues: Argininosuccinate lyase (463 aa).

This sequence belongs to the lyase 1 family. Argininosuccinate lyase subfamily.

The protein localises to the cytoplasm. The catalysed reaction is 2-(N(omega)-L-arginino)succinate = fumarate + L-arginine. It participates in amino-acid biosynthesis; L-arginine biosynthesis; L-arginine from L-ornithine and carbamoyl phosphate: step 3/3. The polypeptide is Argininosuccinate lyase (Ruegeria pomeroyi (strain ATCC 700808 / DSM 15171 / DSS-3) (Silicibacter pomeroyi)).